The sequence spans 245 residues: Dehydrogenase/reductase SDR family member 6 (245 aa).

NAD(+)-binding positions include Q16–I18, D37, and D58. R144 provides a ligand contact to substrate. The active-site Proton acceptor is Y147. NAD(+) contacts are provided by residues K151 and V180 to S184. Positions 188 and 205 each coordinate substrate.

This sequence belongs to the short-chain dehydrogenases/reductases (SDR) family. Homotetramer.

Its subcellular location is the cytoplasm. It carries out the reaction cis-4-hydroxy-L-proline + NAD(+) = 4-oxo-L-proline + NADH + H(+). The catalysed reaction is (R)-3-hydroxybutanoate + NAD(+) = acetoacetate + NADH + H(+). It participates in amino-acid metabolism. The protein operates within siderophore biosynthesis. In terms of biological role, NAD(H)-dependent dehydrogenase/reductase with a preference for cyclic substrates. Catalyzes stereoselective conversion of 4-oxo-L-proline to cis-4-hydroxy-L-proline, likely a detoxification mechanism for ketoprolines. Mediates the formation of 2,5-dihydroxybenzoate (2,5-DHBA), a siderophore that chelates free cytoplasmic iron and associates with LCN2, thereby regulating iron transport and homeostasis while protecting cells against free radical-induced oxidative stress. The iron-siderophore complex is imported into mitochondria, providing an iron source for mitochondrial metabolic processes in particular heme synthesis. May act as a 3-hydroxybutyrate dehydrogenase. The chain is Dehydrogenase/reductase SDR family member 6 from Rattus norvegicus (Rat).